The sequence spans 557 residues: Probable protein kinase UbiB (557 aa).

Residues Ser121–Ala509 form the Protein kinase domain. Residues Leu127 to Val135 and Lys154 each bind ATP. Residue Asp289 is the Proton acceptor of the active site. 2 helical membrane passes run Val506 to His526 and Val535 to Leu555.

It belongs to the ABC1 family. UbiB subfamily.

The protein resides in the cell inner membrane. The protein operates within cofactor biosynthesis; ubiquinone biosynthesis [regulation]. Its function is as follows. Is probably a protein kinase regulator of UbiI activity which is involved in aerobic coenzyme Q (ubiquinone) biosynthesis. The chain is Probable protein kinase UbiB from Xanthomonas euvesicatoria pv. vesicatoria (strain 85-10) (Xanthomonas campestris pv. vesicatoria).